Here is a 415-residue protein sequence, read N- to C-terminus: Esterase FrsA (415 aa).

Belongs to the FrsA family.

It catalyses the reaction a carboxylic ester + H2O = an alcohol + a carboxylate + H(+). Its function is as follows. Catalyzes the hydrolysis of esters. In Serratia proteamaculans (strain 568), this protein is Esterase FrsA.